Consider the following 284-residue polypeptide: MIKKFLSSKESKYVTISLDDNFKKNSVDDKFWTYCKGCDSHVFRKDIEENSFVCPKCSRHYGLRARKRINLLIDKGTFMEFNSDVEFQNPLNFPKYKEKVDSYKEKTKESEAVVTGYGRINGIKTVICVMNPDFMMGSMGSIVGEKITYSIEYAAENNLPIIICSASGGARMQEGMVSLMQMAKTSQALSKLEEKSLPYISVLTDPTTGGVTASFAMLGDIIISEPNTLIGFAGPRVIEQTINQKLPEGFQTSEFLLEKGFIDMIVDRRKMKEVLYQILAMHKK.

The CoA carboxyltransferase N-terminal domain occupies 31–284 (FWTYCKGCDS…LYQILAMHKK (254 aa)). The Zn(2+) site is built by C35, C38, C54, and C57. Residues 35–57 (CKGCDSHVFRKDIEENSFVCPKC) form a C4-type zinc finger.

Belongs to the AccD/PCCB family. In terms of assembly, acetyl-CoA carboxylase is a heterohexamer composed of biotin carboxyl carrier protein (AccB), biotin carboxylase (AccC) and two subunits each of ACCase subunit alpha (AccA) and ACCase subunit beta (AccD). The cofactor is Zn(2+).

The protein resides in the cytoplasm. The enzyme catalyses N(6)-carboxybiotinyl-L-lysyl-[protein] + acetyl-CoA = N(6)-biotinyl-L-lysyl-[protein] + malonyl-CoA. It functions in the pathway lipid metabolism; malonyl-CoA biosynthesis; malonyl-CoA from acetyl-CoA: step 1/1. Functionally, component of the acetyl coenzyme A carboxylase (ACC) complex. Biotin carboxylase (BC) catalyzes the carboxylation of biotin on its carrier protein (BCCP) and then the CO(2) group is transferred by the transcarboxylase to acetyl-CoA to form malonyl-CoA. The chain is Acetyl-coenzyme A carboxylase carboxyl transferase subunit beta from Clostridioides difficile (strain 630) (Peptoclostridium difficile).